The sequence spans 441 residues: MLIKINQYFRKSISVLGNLKLAIILLLMLALFSAFGTVIEQNQNVAFYENSYPNSAPLFGFLSANAILFLGLNNIYQTWWFTTLILLLAVSLFSCTLARQIPSLKMARLWQFYTKDQSLKKIGLSFNLQKTSLSKLAFTLKTDDYNVIQKGRFLYAYKGLPGKIGPIIVHASLIIILFGALLGNLSGFVSQELVPLGGVFHIQNIINSGTLSYVPQNFEGYVKDFKIAYNDEGSIDQFYSDLSILNSTGEEVRSKTIYVNEPLRYEGIVFYQTDWSITNLAINVDQQTNIQLPLKSINVKGEGKFWIASLPIANVEKATNDNILLVLEDLTGKILLYSSNQQLLAIVNVGENISLNGHSVKVTDIISSTGLQIKSDPGIPFVYIGFFLLMLSITLSYFSYSQVWAIKDNKTLYVSGRTNRAIYSFEQQITKMMNKLNSTYA.

3 helical membrane passes run L19–I39, T78–A98, and I164–N184.

It belongs to the Ccs1/CcsB family. In terms of assembly, may interact with CcsA.

It localises to the plastid. Its subcellular location is the chloroplast thylakoid membrane. Required during biogenesis of c-type cytochromes (cytochrome c6 and cytochrome f) at the step of heme attachment. The sequence is that of Cytochrome c biogenesis protein Ccs1 from Rhodomonas salina (Cryptomonas salina).